The following is a 194-amino-acid chain: Large ribosomal subunit protein bL9 (194 aa).

Over residues 166–184 (AENQAQADEQAGELAAAAA) the composition is skewed to low complexity. A disordered region spans residues 166-194 (AENQAQADEQAGELAAAAAERGDMGGDEE). Over residues 185–194 (ERGDMGGDEE) the composition is skewed to basic and acidic residues.

Belongs to the bacterial ribosomal protein bL9 family.

In terms of biological role, binds to the 23S rRNA. This Hyphomonas neptunium (strain ATCC 15444) protein is Large ribosomal subunit protein bL9.